A 208-amino-acid chain; its full sequence is Adult-specific cuticular protein ACP-20 (208 aa).

The N-terminal stretch at 1-17 is a signal peptide; that stretch reads MLVQITALAFLAGIASA. Copy 1 of the repeat occupies 34–43; it reads GLGGGLGGVG. Residues 34 to 180 are 2 X 10 AA repeats; that stretch reads GLGGGLGGVG…GLGGGLGGVG (147 aa). The Chitin-binding type R&amp;R domain maps to 64 to 135; it reads PAHYQFKYGV…VGHAVHPQVL (72 aa). Repeat unit 2 spans residues 171–180; it reads GLGGGLGGVG.

As to expression, epidermal regions synthesizing hard cuticle.

In terms of biological role, cuticular proteins play a significant role in determining the physical properties of cuticles. This Tenebrio molitor (Yellow mealworm beetle) protein is Adult-specific cuticular protein ACP-20 (ACP20).